A 234-amino-acid chain; its full sequence is Sugar fermentation stimulation protein homolog (234 aa).

Belongs to the SfsA family.

The polypeptide is Sugar fermentation stimulation protein homolog (Idiomarina loihiensis (strain ATCC BAA-735 / DSM 15497 / L2-TR)).